Consider the following 43-residue polypeptide: Alpha-1-antiproteinase 4 (43 aa).

The protein belongs to the serpin family. N-glycosylated with carbohydrates having biantennary side chains. Plasma.

Its subcellular location is the secreted. This Equus caballus (Horse) protein is Alpha-1-antiproteinase 4.